Consider the following 701-residue polypeptide: C6 finger domain transcription factor nscR (701 aa).

The zn(2)-C6 fungal-type DNA-binding region spans 17-43 (CELCRERKVKCDKLDPCTNCSSAGVIC).

The protein localises to the nucleus. Its function is as follows. Transcription factor that specifically regulates the neosartoricin B biosynthesis gene cluster. This is C6 finger domain transcription factor nscR from Arthroderma benhamiae (strain ATCC MYA-4681 / CBS 112371) (Trichophyton mentagrophytes).